Reading from the N-terminus, the 76-residue chain is uncharacterized protein (76 aa).

A helical transmembrane segment spans residues 20-42; that stretch reads GIVWGPKLAPWGITLGLGAFYFF.

The protein localises to the membrane. This is an uncharacterized protein from Dictyostelium discoideum (Social amoeba).